The primary structure comprises 243 residues: Carboxy-S-adenosyl-L-methionine synthase (243 aa).

Residues tyrosine 35, 68–70 (GCS), 92–93 (DN), and arginine 199 contribute to the S-adenosyl-L-methionine site.

Belongs to the class I-like SAM-binding methyltransferase superfamily. Cx-SAM synthase family. In terms of assembly, homodimer.

It catalyses the reaction prephenate + S-adenosyl-L-methionine = carboxy-S-adenosyl-L-methionine + 3-phenylpyruvate + H2O. In terms of biological role, catalyzes the conversion of S-adenosyl-L-methionine (SAM) to carboxy-S-adenosyl-L-methionine (Cx-SAM). In Helicobacter pylori (strain P12), this protein is Carboxy-S-adenosyl-L-methionine synthase.